The following is a 189-amino-acid chain: RPW8-like protein 1 (189 aa).

Residues 1–153 (MPLVELLTSA…ITRQPMDIIE (153 aa)) form the RPW8 domain. Residues 7-24 (LTSAALGLSLQLLHDAII) traverse the membrane as a helical segment. 2 coiled-coil regions span residues 65–92 (FRKV…LKLR) and 126–147 (DIKK…ITRQ). N-linked (GlcNAc...) asparagine glycosylation occurs at N177.

Belongs to the plant RPW8 protein family.

It localises to the membrane. In terms of biological role, probable disease resistance (R) protein. The protein is RPW8-like protein 1 of Arabidopsis thaliana (Mouse-ear cress).